A 25-amino-acid chain; its full sequence is Hypotensin-2 (25 aa).

The tract at residues 1–25 (AEIDFSGIPEDIIKEIKETNAKPPA) is disordered. Ser6 is subject to Phosphoserine. Positions 11-25 (DIIKEIKETNAKPPA) are enriched in basic and acidic residues.

Belongs to the non-disulfide-bridged peptide (NDBP) superfamily. As to expression, expressed by the venom gland.

The protein resides in the secreted. Functionally, agonist of the B2 bradykinin receptor (BDKRB2). Potentiates the hypotensive effect of bradykinin (BK) and induces a direct vasorelaxing effect, independently of BK, by endothelium- and nitric oxide (NO)-dependent mechanisms in rat aortic ring preparations. Does not inhibit the angiotensin-converting enzyme (ACE). Also exerts proangiogenic, antiinflammatory, and antifibrogenic activities. Does not inhibit the angiotensin-converting enzyme (ACE) but weakly increases its activity, and weakly inhibits neprilysin (NEP) in a non-competitive manner. Exerts intermediate cytotoxicity and pro-inflammatory effects on mouse macrophages, and increases the phagocytic activity of these murine cells. Presents weak hemolytic activity at physiological concentrations (micromolar range), and weak lactate dehydrogenase (LDH) release from mast cells. Does not induce mast cell degranulation, and antimicrobial effects. In vivo, causes intense pain (but no edema formation), when injected in mice hind paws. Also induces discomfort and anxiety in mice, as it moderately diminishes locomotion and moderately increases rearing behavior. The polypeptide is Hypotensin-2 (Tityus serrulatus (Brazilian scorpion)).